The chain runs to 351 residues: Anthranilate phosphoribosyltransferase (351 aa).

5-phospho-alpha-D-ribose 1-diphosphate contacts are provided by residues G80, 83–84 (GD), T88, 90–93 (NIST), 108–116 (KHGNRSVTS), and S120. Position 80 (G80) interacts with anthranilate. S92 is a binding site for Mg(2+). N111 is a binding site for anthranilate. Anthranilate is bound at residue R166. The Mg(2+) site is built by D229 and E230.

The protein belongs to the anthranilate phosphoribosyltransferase family. As to quaternary structure, homodimer. Mg(2+) serves as cofactor.

It carries out the reaction N-(5-phospho-beta-D-ribosyl)anthranilate + diphosphate = 5-phospho-alpha-D-ribose 1-diphosphate + anthranilate. The protein operates within amino-acid biosynthesis; L-tryptophan biosynthesis; L-tryptophan from chorismate: step 2/5. Catalyzes the transfer of the phosphoribosyl group of 5-phosphorylribose-1-pyrophosphate (PRPP) to anthranilate to yield N-(5'-phosphoribosyl)-anthranilate (PRA). This is Anthranilate phosphoribosyltransferase from Chlorobium limicola (strain DSM 245 / NBRC 103803 / 6330).